The primary structure comprises 254 residues: Methyltransferase-like protein 23 (254 aa).

Positions 1-27 are disordered; that stretch reads MKSFIFRQNPRKQQQEQNNLVDYSDSD. A compositionally biased stretch (polar residues) spans 11–21; it reads RKQQQEQNNLV.

The protein belongs to the methyltransferase superfamily. METTL23 family.

In terms of biological role, probable methyltransferase. This chain is Methyltransferase-like protein 23, found in Dictyostelium discoideum (Social amoeba).